Consider the following 325-residue polypeptide: Cytochrome c biogenesis protein CcsA (325 aa).

8 consecutive transmembrane segments (helical) span residues 12 to 32, 45 to 65, 72 to 92, 100 to 120, 145 to 165, 231 to 251, 264 to 281, and 293 to 313; these read HISFSVVSILISIHLITLLFV, GMIITFFCITGLLVTRWVFSG, LYESLIFLSWTFSIFYMVPYF, LNTIITPSVIFTQGFATSGLL, MILGYATLLCGSLLSVAILVI, TISLGFIFLTIGIISGAVWAN, ETWAFITWTIFAIYLHTR, and IVASIGFLIIWVCYLGINLLG.

The protein belongs to the CcmF/CycK/Ccl1/NrfE/CcsA family. May interact with Ccs1.

The protein localises to the plastid. It is found in the chloroplast thylakoid membrane. Its function is as follows. Required during biogenesis of c-type cytochromes (cytochrome c6 and cytochrome f) at the step of heme attachment. The protein is Cytochrome c biogenesis protein CcsA of Glycine max (Soybean).